The following is an 896-amino-acid chain: Protein bride of sevenless (896 aa).

A signal peptide spans 1–31; the sequence is MKVMDALQSGRRKPLPVALLCILVTVFCVLE. The Extracellular segment spans residues 32–530; it reads CHGADLTSPT…MFWRIKMDTW (499 aa). The interval 38–84 is disordered; it reads TSPTKKSAPLRITKPQPTSQQAKPISITTRAPTTVASTTDDEVSSSV. Polar residues predominate over residues 52-64; the sequence is PQPTSQQAKPISI. The segment covering 65-84 has biased composition (low complexity); the sequence is TTRAPTTVASTTDDEVSSSV. Residues Asn183, Asn307, Asn474, and Asn485 are each glycosylated (N-linked (GlcNAc...) asparagine). 7 helical membrane passes run 531-554, 570-588, 615-637, 655-676, 693-712, 728-748, and 759-781; these read VATG…FIVV, ILLL…PYSI, VFIM…VMLA, AVIC…LVVM, WLWG…GALI, IVIG…LSLF, and LGLQ…FLIV. At 782-896 the chain is on the cytoplasmic side; the sequence is RGIERSDIAQ…SPDHNKITRF (115 aa). Disordered stretches follow at residues 825–844 and 861–896; these read SQDE…PLRG and ANIN…ITRF. Residues 874 to 884 are compositionally biased toward low complexity; that stretch reads QSPSRSSVSSL.

This sequence belongs to the G-protein coupled receptor 3 family. Expressed exclusively by R8 photoreceptor cells and is internalized in a sev-dependent manner by R7 cells.

It is found in the cell membrane. In terms of biological role, acts as a ligand for sevenless tyrosine-kinase receptor during eye development. The polypeptide is Protein bride of sevenless (boss) (Drosophila melanogaster (Fruit fly)).